A 187-amino-acid polypeptide reads, in one-letter code: Proline-rich protein 29 (187 aa).

The tract at residues 133–187 is disordered; the sequence is HQPPWQGEPRIQHQPPASRQEEVRDVPPPPPPSATGTVGADVPPASDYYDAESLP.

The polypeptide is Proline-rich protein 29 (Prr29) (Mus musculus (Mouse)).